Consider the following 1674-residue polypeptide: Maestro heat-like repeat-containing protein family member 2A (1674 aa).

Positions 1–26 are disordered; it reads MTEAITEAAVASSEEVSEERDDLGPL. HEAT repeat units follow at residues 73–96, 97–133, 195–234, 254–292, 382–419, 424–461, 573–612, 615–641, 642–679, 739–776, 993–1030, 1221–1263, 1381–1420, and 1627–1674; these read ATTE…ISTQ, RKVN…EMRE, MPYM…TVQF, LKVF…LLLP, SYPK…ADEP, RAIY…CGYQ, PAPQ…SIAP, ADMW…DQKA, WEDK…SFDS, KTVL…ETVK, GQFG…LHAS, DPLM…SHRP, EKLL…GAPK, and LDFP…QGMS.

This is Maestro heat-like repeat-containing protein family member 2A (MROH2A) from Homo sapiens (Human).